We begin with the raw amino-acid sequence, 426 residues long: 2-(3-amino-3-carboxypropyl)histidine synthase subunit 1 (426 aa).

Cysteine 133, cysteine 239, and cysteine 368 together coordinate [4Fe-4S] cluster.

It belongs to the DPH1/DPH2 family. DPH1 subfamily. Component of the 2-(3-amino-3-carboxypropyl)histidine synthase complex composed of DPH1, DPH2, DPH3 and a NADH-dependent reductase, predominantly CBR1. [4Fe-4S] cluster is required as a cofactor.

The protein resides in the cytoplasm. It carries out the reaction L-histidyl-[translation elongation factor 2] + S-adenosyl-L-methionine = 2-[(3S)-amino-3-carboxypropyl]-L-histidyl-[translation elongation factor 2] + S-methyl-5'-thioadenosine + H(+). It functions in the pathway protein modification; peptidyl-diphthamide biosynthesis. Its function is as follows. Catalyzes the first step of diphthamide biosynthesis, a post-translational modification of histidine which occurs in elongation factor 2. DPH1 and DPH2 transfer a 3-amino-3-carboxypropyl (ACP) group from S-adenosyl-L-methionine (SAM) to a histidine residue, the reaction is assisted by a reduction system comprising DPH3 and a NADH-dependent reductase, predominantly CBR1. The sequence is that of 2-(3-amino-3-carboxypropyl)histidine synthase subunit 1 (DPH1) from Eremothecium gossypii (strain ATCC 10895 / CBS 109.51 / FGSC 9923 / NRRL Y-1056) (Yeast).